The following is a 118-amino-acid chain: Large ribosomal subunit protein uL22 (118 aa).

Belongs to the universal ribosomal protein uL22 family. In terms of assembly, part of the 50S ribosomal subunit.

Functionally, this protein binds specifically to 23S rRNA; its binding is stimulated by other ribosomal proteins, e.g. L4, L17, and L20. It is important during the early stages of 50S assembly. It makes multiple contacts with different domains of the 23S rRNA in the assembled 50S subunit and ribosome. In terms of biological role, the globular domain of the protein is located near the polypeptide exit tunnel on the outside of the subunit, while an extended beta-hairpin is found that lines the wall of the exit tunnel in the center of the 70S ribosome. This Listeria innocua serovar 6a (strain ATCC BAA-680 / CLIP 11262) protein is Large ribosomal subunit protein uL22.